A 317-amino-acid chain; its full sequence is Uridine phosphorylase 2 (317 aa).

Phosphate-binding positions include Gly-66, Arg-100, and 144 to 147; that span reads RIGT. A disulfide bridge links Cys-95 with Cys-102. Uridine-binding positions include 148-149 and 223-225; these read SG and QGR.

The protein belongs to the PNP/UDP phosphorylase family. Homodimer. As to expression, predominantly expressed in kidney.

The catalysed reaction is uridine + phosphate = alpha-D-ribose 1-phosphate + uracil. The enzyme catalyses 2'-deoxyuridine + phosphate = 2-deoxy-alpha-D-ribose 1-phosphate + uracil. The protein operates within pyrimidine metabolism; UMP biosynthesis via salvage pathway; uracil from uridine (phosphorylase route): step 1/1. With respect to regulation, a conditional disulfide bridge can form within the protein that dislocates a critical phosphate-coordinating arginine Arg-100 away from the active site, disabling the enzyme. Catalyzes the reversible phosphorylytic cleavage of uridine to uracil and ribose-1-phosphate which can then be utilized as carbon and energy sources or in the rescue of pyrimidine bases for nucleotide synthesis. Shows broad substrate specificity and can also accept deoxyuridine and other analogous compounds. The polypeptide is Uridine phosphorylase 2 (Homo sapiens (Human)).